The chain runs to 115 residues: Large ribosomal subunit protein uL24 (115 aa).

This sequence belongs to the universal ribosomal protein uL24 family. Part of the 50S ribosomal subunit.

Functionally, one of two assembly initiator proteins, it binds directly to the 5'-end of the 23S rRNA, where it nucleates assembly of the 50S subunit. Its function is as follows. One of the proteins that surrounds the polypeptide exit tunnel on the outside of the subunit. This chain is Large ribosomal subunit protein uL24, found in Amoebophilus asiaticus (strain 5a2).